We begin with the raw amino-acid sequence, 108 residues long: UPF0060 membrane protein Nham_2004 (108 aa).

4 helical membrane-spanning segments follow: residues 5–25, 31–51, 61–81, and 88–108; these read AAYVGAAVAEIAGCFAFWAWL, VWWLAPGMVSLALFAYLLTLV, AAYGGVYIIASLGWLWSVEGL, and LTGAAICLLGAAIILFGPRQI.

This sequence belongs to the UPF0060 family.

It is found in the cell inner membrane. The polypeptide is UPF0060 membrane protein Nham_2004 (Nitrobacter hamburgensis (strain DSM 10229 / NCIMB 13809 / X14)).